A 545-amino-acid chain; its full sequence is CTP synthase (545 aa).

The segment at 1 to 266 (MATNYIFVTG…DDFVCERFRL (266 aa)) is amidoligase domain. S14 provides a ligand contact to CTP. S14 contacts UTP. Residues 15 to 20 (SLGKGI) and D72 contribute to the ATP site. Positions 72 and 140 each coordinate Mg(2+). CTP contacts are provided by residues 147–149 (DIE), 187–192 (KTKPTQ), and K223. UTP contacts are provided by residues 187-192 (KTKPTQ) and K223. Residue 239-241 (KDV) coordinates ATP. A Glutamine amidotransferase type-1 domain is found at 291–542 (TIGMVGKYTE…VKAAYENHKK (252 aa)). G352 contributes to the L-glutamine binding site. Residue C379 is the Nucleophile; for glutamine hydrolysis of the active site. L-glutamine is bound by residues 380-383 (LGMQ), E403, and R470. Active-site residues include H515 and E517.

It belongs to the CTP synthase family. In terms of assembly, homotetramer.

It carries out the reaction UTP + L-glutamine + ATP + H2O = CTP + L-glutamate + ADP + phosphate + 2 H(+). It catalyses the reaction L-glutamine + H2O = L-glutamate + NH4(+). The enzyme catalyses UTP + NH4(+) + ATP = CTP + ADP + phosphate + 2 H(+). The protein operates within pyrimidine metabolism; CTP biosynthesis via de novo pathway; CTP from UDP: step 2/2. Allosterically activated by GTP, when glutamine is the substrate; GTP has no effect on the reaction when ammonia is the substrate. The allosteric effector GTP functions by stabilizing the protein conformation that binds the tetrahedral intermediate(s) formed during glutamine hydrolysis. Inhibited by the product CTP, via allosteric rather than competitive inhibition. Its function is as follows. Catalyzes the ATP-dependent amination of UTP to CTP with either L-glutamine or ammonia as the source of nitrogen. Regulates intracellular CTP levels through interactions with the four ribonucleotide triphosphates. This Haemophilus influenzae (strain PittGG) protein is CTP synthase.